The primary structure comprises 355 residues: MISYPFFSLSPPGLVPPPMAVPPVEMYSGSFWNRMRKPLPLRTQVIRFTVVFVIVSFILAVALQITHERMPDPKVTKPLPDLGFELLTKISFLSVVTDVLIAFLSSLSFFTLWKLYLLHRHCVGSGEPELPCNIPGVSRFFLSVWLCKENCRIELRNVHTIAWIRFITSYALLLLFRSLVIVMTSMPTPVDKCQNPPKIENPVKNVILTVLTAGGGSIHCGDLMYSGHTVILTLHLMFHWIYGAMVHWSFRPVVTVVAIFGYYCIVASRSHYTDDVLVAIYLTIATFIAVGHNADGAPWQLQLFIRWLPCCGANSREVTEDSQPVMVAFKSEAVDELRERDDSAGLSCEVSTNEV.

The Cytoplasmic segment spans residues 1-44; sequence MISYPFFSLSPPGLVPPPMAVPPVEMYSGSFWNRMRKPLPLRTQ. A helical transmembrane segment spans residues 45–65; the sequence is VIRFTVVFVIVSFILAVALQI. Topologically, residues 66-89 are extracellular; it reads THERMPDPKVTKPLPDLGFELLTK. The chain crosses the membrane as a helical span at residues 90–110; it reads ISFLSVVTDVLIAFLSSLSFF. The Cytoplasmic portion of the chain corresponds to 111–165; the sequence is TLWKLYLLHRHCVGSGEPELPCNIPGVSRFFLSVWLCKENCRIELRNVHTIAWIR. A helical transmembrane segment spans residues 166–186; that stretch reads FITSYALLLLFRSLVIVMTSM. The Extracellular portion of the chain corresponds to 187–205; it reads PTPVDKCQNPPKIENPVKN. The chain crosses the membrane as a helical span at residues 206–226; it reads VILTVLTAGGGSIHCGDLMYS. The Cytoplasmic portion of the chain corresponds to 227 to 251; the sequence is GHTVILTLHLMFHWIYGAMVHWSFR. Catalysis depends on residues His-228, His-271, and Asp-275. Residues 252–272 form a helical membrane-spanning segment; sequence PVVTVVAIFGYYCIVASRSHY. At 273–275 the chain is on the extracellular side; it reads TDD. Residues 276–296 form a helical membrane-spanning segment; the sequence is VLVAIYLTIATFIAVGHNADG. Residues 297-355 lie on the Cytoplasmic side of the membrane; that stretch reads APWQLQLFIRWLPCCGANSREVTEDSQPVMVAFKSEAVDELRERDDSAGLSCEVSTNEV.

Belongs to the sphingomyelin synthase family.

The protein resides in the membrane. In terms of biological role, bidirectional lipid inositolphosphotransferase capable of converting phosphatidylinositol (PI) and ceramide to inositol-phosphorylceramide (IPC) and diacylglycerol (DAG) and vice versa. Direction is dependent on the relative concentrations of DAG and ceramide as phosphoinositol acceptors. Does not function strictly as a SM synthase. Essential for viability of the pathogenic bloodstream stage of this human protozoan parasite and, consequently, can be considered as potential drug target. This is Phosphatidylinositol:ceramide inositolphosphotransferase from Trypanosoma brucei brucei (strain 927/4 GUTat10.1).